A 572-amino-acid chain; its full sequence is Urease subunit alpha (572 aa).

Positions alanine 134–glycine 572 constitute a Urease domain. The Ni(2+) site is built by histidine 139, histidine 141, and lysine 222. At lysine 222 the chain carries N6-carboxylysine. Histidine 224 is a binding site for substrate. 2 residues coordinate Ni(2+): histidine 251 and histidine 277. The Proton donor role is filled by histidine 325. Position 365 (aspartate 365) interacts with Ni(2+).

This sequence belongs to the metallo-dependent hydrolases superfamily. Urease alpha subunit family. As to quaternary structure, heterotrimer of UreA (gamma), UreB (beta) and UreC (alpha) subunits. Three heterotrimers associate to form the active enzyme. Ni cation is required as a cofactor. In terms of processing, carboxylation allows a single lysine to coordinate two nickel ions.

The protein resides in the cytoplasm. It carries out the reaction urea + 2 H2O + H(+) = hydrogencarbonate + 2 NH4(+). Its pathway is nitrogen metabolism; urea degradation; CO(2) and NH(3) from urea (urease route): step 1/1. The polypeptide is Urease subunit alpha (Edwardsiella ictaluri (strain 93-146)).